The chain runs to 609 residues: Membrane-bound O-acyltransferase GUP2 (609 aa).

The N-terminal stretch at 1-18 (MSMLRIWSCIVHFFSVQA) is a signal peptide. The Lumenal segment spans residues 19-75 (LDSRIKPDIEFKRRQRIFINSSKEENGSSSSAVTVTRNPVLSSNSPSPPLWNTWEFR). The chain crosses the membrane as a helical span at residues 76-96 (LYYLAFTVVVPFMIKAALATS). Topologically, residues 97 to 133 (SESNPNYYKFSGLLAHGWILGRKVDNSDPQYRFFRSN) are cytoplasmic. Residues 134–154 (FFLLAILILLQIILKKVFVKF) form a helical membrane-spanning segment. Residues 155–169 (SKIPKTKFDFACGLV) are Lumenal-facing. The chain crosses the membrane as a helical span at residues 170 to 190 (FVCFMYGINSVKLFTHAFIFF). Over 191–200 (TLAHSLKRKR) the chain is Cytoplasmic. A helical transmembrane segment spans residues 201–221 (LIAAFAIWSYGIFTLFINQKM). Residues 222 to 324 (KNLPFNNIAI…VAEHHIQDYN (103 aa)) are Lumenal-facing. A helical transmembrane segment spans residues 325-345 (FINFIAYITYAPLFLVGPIIT). The Cytoplasmic segment spans residues 346-371 (FNDYLYQSENKLPSLTKKNIGFYALK). A helical membrane pass occupies residues 372–392 (VFSSLLLMEIILHYIYVGAIA). The Lumenal segment spans residues 393 to 406 (RTKAWNNDTPLQQA). The helical transmembrane segment at 407-427 (MIALFNLNIMYLKLLIPWRLF) threads the bilayer. The Cytoplasmic portion of the chain corresponds to 428 to 474 (RLWAMVDGIDAPENMLRCVDNNYSTVGFWRAWHTSFNKWVIRYIYVP). The chain crosses the membrane as a helical span at residues 475–495 (FGGSNNKILTSFAVFSFVAIW). The active site involves H496. Residues 496 to 502 (HDIQLRV) lie on the Lumenal side of the membrane. Residues 503 to 523 (LFWGWLTVLLLLGETYITNCF) traverse the membrane as a helical segment. Residues 524-533 (SRYRFRSWYR) are Cytoplasmic-facing. Residues 534 to 554 (FVCGIGAAINICMMMIINVYG) traverse the membrane as a helical segment. Over 555 to 575 (FCLGAEGTKLLLKGIFNNSHS) the chain is Lumenal. A helical transmembrane segment spans residues 576 to 596 (PEFLTAVMVSLFIAVQVMFEI). Topologically, residues 597–609 (REEEKRHGINLKC) are cytoplasmic.

It belongs to the membrane-bound acyltransferase family.

It localises to the endoplasmic reticulum membrane. Its function is as follows. Probable membrane-bound O-acyltransferase. Together with GUP1, has an influence on the chemical composition of the yeast extracellular matrix (yECM) in yeast multicellular aggregates, such as biofilms and colonies. The protein is Membrane-bound O-acyltransferase GUP2 (GUP2) of Saccharomyces cerevisiae (strain ATCC 204508 / S288c) (Baker's yeast).